A 154-amino-acid polypeptide reads, in one-letter code: Snaclec EMS16 subunit beta (154 aa).

The signal sequence occupies residues 1-26 (MGRLISVRFSLLVVFLSLSGIGAGLC). The cysteines at positions 27 and 38 are disulfide-linked. The C-type lectin domain maps to 34 to 147 (FDQHCYKVFE…CEKSVSFVCK (114 aa)). N47 carries an N-linked (GlcNAc...) asparagine glycan. 2 disulfides stabilise this stretch: C55–C146 and C121–C138.

It belongs to the snaclec family. Heterodimer of subunits A and B; disulfide-linked. In terms of tissue distribution, expressed by the venom gland.

Its subcellular location is the secreted. In terms of biological role, EMS16 is a potent and selective inhibitor of alpha-2/beta-1 (ITGA2/ITGB1) integrin and acts as a potent antagonist of platelet aggregation and cell migration. Binds specifically to the I domain of the alpha-2 subunit, in a metal ion-independent fashion. The sequence is that of Snaclec EMS16 subunit beta from Echis multisquamatus (Central Asian sand viper).